Consider the following 74-residue polypeptide: Protein krueppel (74 aa).

C2H2-type zinc fingers lie at residues 1-4 (ERTH), 10-32 (FECS…MRLH), 38-60 (YHCT…LRVH), and 66-74 (YACELCASR).

The protein belongs to the krueppel C2H2-type zinc-finger protein family.

It is found in the nucleus. Functionally, krueppel is a gap class segmentation protein. The polypeptide is Protein krueppel (Kr) (Euscelis plebejus (Leafhopper)).